A 384-amino-acid chain; its full sequence is 5-amino-6-(D-ribitylamino)uracil--L-tyrosine 4-hydroxyphenyl transferase 2 (384 aa).

Positions 53-286 constitute a Radical SAM core domain; sequence VSYVVNRNIY…IAISRVILHT (234 aa). Residues Cys67, Cys71, and Cys74 each coordinate [4Fe-4S] cluster.

It belongs to the radical SAM superfamily. CofH family. As to quaternary structure, consists of two subunits, CofG and CofH. It depends on [4Fe-4S] cluster as a cofactor.

The enzyme catalyses 5-amino-6-(D-ribitylamino)uracil + L-tyrosine + S-adenosyl-L-methionine = 5-amino-5-(4-hydroxybenzyl)-6-(D-ribitylimino)-5,6-dihydrouracil + 2-iminoacetate + 5'-deoxyadenosine + L-methionine + H(+). The protein operates within cofactor biosynthesis; coenzyme F0 biosynthesis. Its function is as follows. Catalyzes the radical-mediated synthesis of 5-amino-5-(4-hydroxybenzyl)-6-(D-ribitylimino)-5,6-dihydrouracil from 5-amino-6-(D-ribitylamino)uracil and L-tyrosine. This is 5-amino-6-(D-ribitylamino)uracil--L-tyrosine 4-hydroxyphenyl transferase 2 from Methanosarcina barkeri (strain Fusaro / DSM 804).